The following is a 303-amino-acid chain: CDAN1-interacting nuclease 1 (303 aa).

The protein localises to the nucleus. It is found in the cytoplasm. Its function is as follows. May play a role in erythroid cell differentiation. In Xenopus laevis (African clawed frog), this protein is CDAN1-interacting nuclease 1.